The following is a 731-amino-acid chain: 1,4-alpha-glucan branching enzyme GlgB (731 aa).

Catalysis depends on aspartate 412, which acts as the Nucleophile. Glutamate 465 functions as the Proton donor in the catalytic mechanism.

It belongs to the glycosyl hydrolase 13 family. GlgB subfamily. In terms of assembly, monomer.

The catalysed reaction is Transfers a segment of a (1-&gt;4)-alpha-D-glucan chain to a primary hydroxy group in a similar glucan chain.. The protein operates within glycan biosynthesis; glycogen biosynthesis. Catalyzes the formation of the alpha-1,6-glucosidic linkages in glycogen by scission of a 1,4-alpha-linked oligosaccharide from growing alpha-1,4-glucan chains and the subsequent attachment of the oligosaccharide to the alpha-1,6 position. The protein is 1,4-alpha-glucan branching enzyme GlgB of Bordetella bronchiseptica (strain ATCC BAA-588 / NCTC 13252 / RB50) (Alcaligenes bronchisepticus).